The following is a 397-amino-acid chain: MNIHEYQAKALLKSFGAPVAEGVPVLSLADVQKAIDTLPGPLWVVKSQIHAGGRGKGKFIEKEAGEKGGVRLAFNKEDVKKHAEAMLGNHLVTAQTSAAGKQVNRLYIEDGADIEKELYLSILVDRATSNVAFVVSTEGGMDIEAVAHDTPEKILTVQIDPMAGVTPADAAKINSALNLSGSAAEDGLKLYPILYKAFVEKDMAMLEVNPLIVMKDGHLRVLDAKVSFDGNALFRHPDVAALKDETEQDAKELEAAEWDLAYIALDGTIGCMVNGAGLAMATMDIIKLYGEEPANFCDVGGGAGKEKVAAAFKIIMKDPNVKGILVNIFGGIMKCDVIAEGVIAAVKETNLAVPLVVRLEGTNVDLGKKIIRESGLNVIPADDLDDAAQKIVKAVRG.

Residues Lys-9–Glu-254 enclose the ATP-grasp domain. Residues Lys-46, Gly-53–Gly-55, Glu-109, Ala-112, and Glu-117 each bind ATP. Residues Asn-209 and Asp-223 each coordinate Mg(2+). Substrate-binding positions include Asn-274 and Gly-331–Met-333.

This sequence belongs to the succinate/malate CoA ligase beta subunit family. Heterotetramer of two alpha and two beta subunits. Requires Mg(2+) as cofactor.

It catalyses the reaction succinate + ATP + CoA = succinyl-CoA + ADP + phosphate. The enzyme catalyses GTP + succinate + CoA = succinyl-CoA + GDP + phosphate. Its pathway is carbohydrate metabolism; tricarboxylic acid cycle; succinate from succinyl-CoA (ligase route): step 1/1. Functionally, succinyl-CoA synthetase functions in the citric acid cycle (TCA), coupling the hydrolysis of succinyl-CoA to the synthesis of either ATP or GTP and thus represents the only step of substrate-level phosphorylation in the TCA. The beta subunit provides nucleotide specificity of the enzyme and binds the substrate succinate, while the binding sites for coenzyme A and phosphate are found in the alpha subunit. In Hyphomonas neptunium (strain ATCC 15444), this protein is Succinate--CoA ligase [ADP-forming] subunit beta.